A 252-amino-acid chain; its full sequence is Hydroxyacylglutathione hydrolase (252 aa).

The Zn(2+) site is built by histidine 54, histidine 56, aspartate 58, histidine 59, histidine 111, aspartate 128, and histidine 166.

This sequence belongs to the metallo-beta-lactamase superfamily. Glyoxalase II family. As to quaternary structure, monomer. It depends on Zn(2+) as a cofactor.

The enzyme catalyses an S-(2-hydroxyacyl)glutathione + H2O = a 2-hydroxy carboxylate + glutathione + H(+). It functions in the pathway secondary metabolite metabolism; methylglyoxal degradation; (R)-lactate from methylglyoxal: step 2/2. Functionally, thiolesterase that catalyzes the hydrolysis of S-D-lactoyl-glutathione to form glutathione and D-lactic acid. The protein is Hydroxyacylglutathione hydrolase of Photobacterium profundum (strain SS9).